Here is a 252-residue protein sequence, read N- to C-terminus: Putative peptide zinc metalloprotease protein YydH (252 aa).

A run of 2 helical transmembrane segments spans residues F56–I76 and V85–L105. H106 is a Zn(2+) binding site. E107 is an active-site residue. H110 contributes to the Zn(2+) binding site. A run of 3 helical transmembrane segments spans residues I152–I172, A181–L201, and I231–V251.

It belongs to the peptidase M50B family. Zn(2+) serves as cofactor.

It localises to the cell membrane. In terms of biological role, required for production of the modified peptide YydF. May process the precursor form of YydF to release the active peptide (Potential). This is Putative peptide zinc metalloprotease protein YydH (yydH) from Bacillus subtilis (strain 168).